We begin with the raw amino-acid sequence, 515 residues long: Protein nucleotidyltransferase YdiU (515 aa).

The ATP site is built by glycine 101, glycine 103, arginine 104, lysine 124, aspartate 136, glycine 137, arginine 194, and arginine 201. The Proton acceptor role is filled by aspartate 269. Asparagine 270 and aspartate 279 together coordinate Mg(2+). Residue aspartate 279 participates in ATP binding.

Belongs to the SELO family. Mg(2+) is required as a cofactor. Requires Mn(2+) as cofactor.

The enzyme catalyses L-seryl-[protein] + ATP = 3-O-(5'-adenylyl)-L-seryl-[protein] + diphosphate. It catalyses the reaction L-threonyl-[protein] + ATP = 3-O-(5'-adenylyl)-L-threonyl-[protein] + diphosphate. The catalysed reaction is L-tyrosyl-[protein] + ATP = O-(5'-adenylyl)-L-tyrosyl-[protein] + diphosphate. It carries out the reaction L-histidyl-[protein] + UTP = N(tele)-(5'-uridylyl)-L-histidyl-[protein] + diphosphate. The enzyme catalyses L-seryl-[protein] + UTP = O-(5'-uridylyl)-L-seryl-[protein] + diphosphate. It catalyses the reaction L-tyrosyl-[protein] + UTP = O-(5'-uridylyl)-L-tyrosyl-[protein] + diphosphate. Nucleotidyltransferase involved in the post-translational modification of proteins. It can catalyze the addition of adenosine monophosphate (AMP) or uridine monophosphate (UMP) to a protein, resulting in modifications known as AMPylation and UMPylation. This is Protein nucleotidyltransferase YdiU from Cytophaga hutchinsonii (strain ATCC 33406 / DSM 1761 / CIP 103989 / NBRC 15051 / NCIMB 9469 / D465).